A 67-amino-acid chain; its full sequence is uncharacterized protein (67 aa).

This is an uncharacterized protein from Fowlpox virus (strain NVSL) (FPV).